The chain runs to 2155 residues: Alpha-tectorin (2155 aa).

The first 22 residues, 1–22, serve as a signal peptide directing secretion; the sequence is MNYSSFLRIWVSFIFALVQHQA. Asn34, Asn187, Asn215, Asn278, Asn455, Asn506, Asn528, and Asn560 each carry an N-linked (GlcNAc...) asparagine glycan. One can recognise an NIDO domain in the interval 98–252; that stretch reads PFWADVHNGI…GRWAFKVDGK (155 aa). A VWFC domain is found at 260–314; that stretch reads CTSRGQFLRRGEVFWDDLNCTVKCRCLDFNNEIYCQEASCSPYEVCEPKGKFFYC. Positions 320-500 constitute a VWFD 1 domain; that stretch reads STCVVFGEPH…RVYHADWKCD (181 aa). Disulfide bonds link Cys322/Cys461 and Cys344/Cys499. The TIL 1 domain maps to 597–650; sequence CPSFSHYSVCTSSCPDTCSDLTASRNCATPCTEGCECNQGFVLSTSQCVPLHKC. Residues Asn670, Asn687, Asn813, Asn843, Asn855, Asn898, Asn920, Asn931, and Asn949 are each glycosylated (N-linked (GlcNAc...) asparagine). In terms of domain architecture, VWFD 2 spans 711 to 886; it reads TVCLLSQNQV…SWTTFEEICN (176 aa). Cysteines 713 and 849 form a disulfide. The TIL 2 domain occupies 984 to 1036; the sequence is CPENSHFEECITCTETCETLTLGPICVDSCSEGCQCDEGYALLGSQCVTRSEC. Residues Asn1048, Asn1235, and Asn1364 are each glycosylated (N-linked (GlcNAc...) asparagine). Residues 1098–1278 enclose the VWFD 3 domain; sequence ASCIVSGYGH…SWVKRDTFCQ (181 aa). 2 cysteine pairs are disulfide-bonded: Cys1100–Cys1241 and Cys1122–Cys1277. The TIL 3 domain occupies 1372-1425; that stretch reads CPPNSHYESCVSVCQPRCAAIRLKSDCSHYCVEGCHCDAGYVLNGKSCILPHSC. A VWFD 4 domain is found at 1485 to 1666; sequence SYCLAAGGGV…QKRPLAPSCN (182 aa). Cystine bridges form between Cys1487-Cys1622, Cys1509-Cys1665, Cys1717-Cys1775, Cys1741-Cys1784, Cys1786-Cys1818, Cys1806-Cys1898, and Cys1837-Cys1857. N-linked (GlcNAc...) asparagine glycans are attached at residues Asn1538, Asn1565, Asn1756, Asn1772, Asn1794, Asn1851, Asn1864, Asn1880, Asn1920, and Asn1939. The ZP domain maps to 1805-2059; sequence TCKAAQMEVS…YSCKITCPHN (255 aa). 3 disulfides stabilise this stretch: Cys1980–Cys2040, Cys2001–Cys2056, and Cys2045–Cys2052. The GPI-anchor amidated asparagine moiety is linked to residue Asn2091. A propeptide spans 2092–2155 (removed in mature form); sequence GGCEQICTSR…HFVYKSGTTS (64 aa).

In terms of assembly, may form homomeric filament after self-association or heteromeric filament after association with beta-tectorin. Interacts with CEACAM16. The presence of a hydrophobic C-terminus preceded by a potential cleavage site strongly suggests that tectorins are synthesized as glycosylphosphatidylinositol-linked, membrane-bound precursors. Tectorins are targeted to the apical surface of the inner ear epithelia by the lipid and proteolytically released into the extracellular compartment.

It localises to the cell membrane. Its subcellular location is the secreted. It is found in the extracellular space. The protein localises to the extracellular matrix. In terms of biological role, one of the major non-collagenous components of the tectorial membrane. The tectorial membrane is an extracellular matrix of the inner ear that covers the neuroepithelium of the cochlea and contacts the stereocilia bundles of specialized sensory hair cells. Sound induces movement of these hair cells relative to the tectorial membrane, deflects the stereocilia and leads to fluctuations in hair-cell membrane potential, transducing sound into electrical signals. This Homo sapiens (Human) protein is Alpha-tectorin (TECTA).